We begin with the raw amino-acid sequence, 1261 residues long: Pentatricopeptide repeat-containing protein 5, mitochondrial (1261 aa).

PPR repeat units follow at residues 365–404, 405–442, 443–479, 480–514, 550–584, 806–849, 852–886, 887–924, 925–959, 960–995, 996–1031, 1032–1068, 1109–1143, 1144–1179, and 1180–1214; these read HPDLLPALIRALGRAKRLNSCFQLLERYNLSDPTSDTSMT, NVRSWEGLMEAYFDTDHHVEASALMKSFFRKADSNQVI, PSSILDCFLRRLAQLGHYKESAEWLGMAIEKISTYKA, SPSTLSSILEAACLNNNDKFAIAFVRKYTLSRFSD, TNFTFSNVYKAFIENGKIDVALRLLRKHIDPKVSL, HPEV…EKAN, MALILDAMILSSSFARQFKSSNLFCDNMKMLGYIP, RASTFAHLINNSTRRGDTDDATTALNIFEETKRHNVKP, SVFLYNAVLSKLGRARRTTECWKLFQEMKESGLLP, TSVTYGTVINAACRIGDESLAEKLFAEMENQPNYQP, RVAPYNTMIQFEVQTMFNREKALFYYNRLCATDIEP, SSHTYKLLMDAYGTLKPVNVGSVKAVLELMERTDVPI, DANLFQSQIESLIANDRIVEGIQIVSDMKRYNVSL, NAYIVNALIKGFTKVGMISKARYYFDLLECEGMSGK, and EPSTYENMVRAYLSVNDGRKAMEIVEQLKRKRYPL. Residues 1225–1261 are disordered; sequence NSHMGQKPKRRSLNTSHSSLASLGNASTQHSINSSIN. Polar residues predominate over residues 1237-1261; that stretch reads LNTSHSSLASLGNASTQHSINSSIN.

The protein localises to the mitochondrion. Mitochondrial RNA-binding protein that acts as a general negative regulator of mitochondrial translation. This Schizosaccharomyces pombe (strain 972 / ATCC 24843) (Fission yeast) protein is Pentatricopeptide repeat-containing protein 5, mitochondrial (ppr5).